Consider the following 420-residue polypeptide: Glucose-1-phosphate adenylyltransferase (420 aa).

Residues Y107, G172, 187-188 (EK), and S205 contribute to the alpha-D-glucose 1-phosphate site.

It belongs to the bacterial/plant glucose-1-phosphate adenylyltransferase family. Homotetramer.

The enzyme catalyses alpha-D-glucose 1-phosphate + ATP + H(+) = ADP-alpha-D-glucose + diphosphate. The protein operates within glycan biosynthesis; glycogen biosynthesis. Its function is as follows. Involved in the biosynthesis of ADP-glucose, a building block required for the elongation reactions to produce glycogen. Catalyzes the reaction between ATP and alpha-D-glucose 1-phosphate (G1P) to produce pyrophosphate and ADP-Glc. The protein is Glucose-1-phosphate adenylyltransferase of Rhizobium rhizogenes (strain K84 / ATCC BAA-868) (Agrobacterium radiobacter).